The following is a 263-amino-acid chain: Superoxide dismutase [Fe] 3, chloroplastic (263 aa).

The N-terminal 41 residues, 1 to 41 (MSSCVVTTSCFYTISDSSIRLKSPKLLNLSNQQRRRSLRSR), are a transit peptide targeting the chloroplast. Positions 74, 127, 211, and 215 each coordinate Fe cation.

The protein belongs to the iron/manganese superoxide dismutase family. As to quaternary structure, homodimer. Heterodimer with FSD2. Interacts with MRL7. Requires Fe cation as cofactor.

It localises to the plastid. Its subcellular location is the chloroplast thylakoid. It carries out the reaction 2 superoxide + 2 H(+) = H2O2 + O2. With respect to regulation, activated by cpn20/cpn21 (in vitro). Functionally, destroys superoxide anion radicals which are normally produced within the cells and which are toxic to biological systems. Plays important role in chloroplast development, particularly in the maintenance of thylakoids membranes. Seems to act as a heterodimer with FSD2. This is Superoxide dismutase [Fe] 3, chloroplastic from Arabidopsis thaliana (Mouse-ear cress).